A 249-amino-acid polypeptide reads, in one-letter code: Expansin-A19 (249 aa).

The first 21 residues, 1-21 (MGNIFLQLLAVVALCIAPARS), serve as a signal peptide directing secretion. An Expansin-like EG45 domain is found at 41–154 (GGACGYGNLY…QQVKCWRYGG (114 aa)). 2 N-linked (GlcNAc...) asparagine glycosylation sites follow: asparagine 116 and asparagine 216. An Expansin-like CBD domain is found at 164-243 (YFELVLVTNM…GWSFGQTFST (80 aa)).

The protein belongs to the expansin family. Expansin A subfamily.

It localises to the secreted. Its subcellular location is the cell wall. It is found in the membrane. Its function is as follows. May cause loosening and extension of plant cell walls by disrupting non-covalent bonding between cellulose microfibrils and matrix glucans. No enzymatic activity has been found. May be required for rapid internodal elongation in deepwater rice during submergence. The protein is Expansin-A19 (EXPA19) of Oryza sativa subsp. japonica (Rice).